Consider the following 543-residue polypeptide: Rop guanine nucleotide exchange factor 11 (543 aa).

The disordered stretch occupies residues 61-89 (QPGKCGSVDRPSLPIGGVTPNRNDKLPRV). The 362-residue stretch at 95–456 (MEALIILQAA…QLTQEPTNNA (362 aa)) folds into the PRONE domain.

In terms of assembly, interacts with ARAC4/ROP2, ARAC3/ROP, ARAC9/ROP8, PHYA and PHYB. In terms of tissue distribution, highly expressed in elongating regions of roots and pollen grains. Expressed in flowers, and at lower levels in leaves and stems.

Its subcellular location is the cytoplasm. Its function is as follows. Guanine-nucleotide exchange factor (GEF) that acts as an activator of Rop (Rho of plants) GTPases by promoting the exchange of GDP for GTP. Functions as a light-signaling switch that functions in root growth and development through the activation of Rop in a phytochrome-dependent manner. May act as a negative regulator of phytochrome-mediated primary root development. The sequence is that of Rop guanine nucleotide exchange factor 11 (ROPGEF11) from Arabidopsis thaliana (Mouse-ear cress).